Consider the following 142-residue polypeptide: Hemoglobin subunit alpha (142 aa).

Residues 2–142 (VLSAADKNNV…VSTVLTSKYR (141 aa)) form the Globin domain. S4 carries the phosphoserine modification. N6-succinyllysine occurs at positions 8 and 12. At K17 the chain carries N6-acetyllysine; alternate. The residue at position 17 (K17) is an N6-succinyllysine; alternate. The residue at position 25 (Y25) is a Phosphotyrosine. At S36 the chain carries Phosphoserine. At K41 the chain carries N6-succinyllysine. S50 is subject to Phosphoserine. O2 is bound at residue H59. A heme b-binding site is contributed by H88. T109 is modified (phosphothreonine). S125 and S132 each carry phosphoserine. 2 positions are modified to phosphothreonine: T135 and T138. S139 bears the Phosphoserine mark.

This sequence belongs to the globin family. In terms of assembly, heterotetramer of two alpha chains and two beta chains. In terms of tissue distribution, red blood cells.

Functionally, involved in oxygen transport from the lung to the various peripheral tissues. Hemopressin acts as an antagonist peptide of the cannabinoid receptor CNR1. Hemopressin-binding efficiently blocks cannabinoid receptor CNR1 and subsequent signaling. This is Hemoglobin subunit alpha (HBA) from Cavia porcellus (Guinea pig).